The sequence spans 133 residues: Secreted effector protein SteB (133 aa).

Its subcellular location is the secreted. The protein resides in the host cytoplasm. Its function is as follows. Effector proteins function to alter host cell physiology and promote bacterial survival in host tissues. The polypeptide is Secreted effector protein SteB (steB) (Salmonella typhimurium (strain 14028s / SGSC 2262)).